A 168-amino-acid polypeptide reads, in one-letter code: Cysteine-rich perinuclear theca protein 1 (168 aa).

Positions 144–168 are disordered; the sequence is NVSDPEEVPPCLDSDPFPNGDLASS.

Specifically expressed in spermatozoa (at protein level). Detected from the elongated spermatid stage onwards; not found in immature germ cells or somatic cells (at protein level).

It is found in the cytoplasm. It localises to the cytoskeleton. The protein localises to the perinuclear theca. The sequence is that of Cysteine-rich perinuclear theca protein 1 from Mus musculus (Mouse).